Reading from the N-terminus, the 98-residue chain is 10 kDa chaperonin (98 aa).

The protein belongs to the GroES chaperonin family. Forms stable complexes with CPN60 in the presence of ATP.

It localises to the cytoplasm. In terms of biological role, seems to function only as a co-chaperone, along with cpn60, and in certain cases is essential for the discharge of biologically active proteins from cpn60. The chain is 10 kDa chaperonin from Brassica napus (Rape).